A 132-amino-acid chain; its full sequence is 3-aminoacrylate deaminase RutC (132 aa).

The protein belongs to the RutC family.

The enzyme catalyses (Z)-3-aminoacrylate + H2O + H(+) = 3-oxopropanoate + NH4(+). Functionally, involved in pyrimidine catabolism. Catalyzes the deamination of 3-aminoacrylate to malonic semialdehyde, a reaction that can also occur spontaneously. RutC may facilitate the reaction and modulate the metabolic fitness, rather than catalyzing essential functions. The protein is 3-aminoacrylate deaminase RutC of Cronobacter turicensis (strain DSM 18703 / CCUG 55852 / LMG 23827 / z3032).